The chain runs to 326 residues: CRISPR-associated endonuclease Cas1 (326 aa).

3 residues coordinate Mn(2+): glutamate 191, histidine 255, and aspartate 269.

This sequence belongs to the CRISPR-associated endonuclease Cas1 family. In terms of assembly, homodimer. Interacts with Cas3, in the absence of crRNA. The cofactor is Mg(2+). Mn(2+) is required as a cofactor.

Functionally, CRISPR (clustered regularly interspaced short palindromic repeat), is an adaptive immune system that provides protection against mobile genetic elements (viruses, transposable elements and conjugative plasmids). CRISPR clusters contain sequences complementary to antecedent mobile elements and target invading nucleic acids. CRISPR clusters are transcribed and processed into CRISPR RNA (crRNA). Acts as a dsDNA endonuclease. Involved in the integration of spacer DNA into the CRISPR cassette. This chain is CRISPR-associated endonuclease Cas1, found in Pectobacterium atrosepticum (strain SCRI 1043 / ATCC BAA-672) (Erwinia carotovora subsp. atroseptica).